The sequence spans 368 residues: Homoserine O-acetyltransferase (368 aa).

The region spanning 44–350 (NAILVAHAWT…AYGHDAFLLE (307 aa)) is the AB hydrolase-1 domain. Ser150 acts as the Nucleophile in catalysis. Arg217 lines the substrate pocket. Catalysis depends on residues Asp311 and His344. Asp345 is a binding site for substrate.

The protein belongs to the AB hydrolase superfamily. MetX family. Homodimer.

The protein localises to the cytoplasm. The catalysed reaction is L-homoserine + acetyl-CoA = O-acetyl-L-homoserine + CoA. It functions in the pathway amino-acid biosynthesis; L-methionine biosynthesis via de novo pathway; O-acetyl-L-homoserine from L-homoserine: step 1/1. Its function is as follows. Transfers an acetyl group from acetyl-CoA to L-homoserine, forming acetyl-L-homoserine. This Geobacter sulfurreducens (strain ATCC 51573 / DSM 12127 / PCA) protein is Homoserine O-acetyltransferase.